Here is a 340-residue protein sequence, read N- to C-terminus: Uroporphyrinogen decarboxylase (340 aa).

Substrate contacts are provided by residues 21–25 (RQAGR), Asp71, Tyr148, Ser203, and His316.

Belongs to the uroporphyrinogen decarboxylase family. As to quaternary structure, homodimer.

It is found in the cytoplasm. The catalysed reaction is uroporphyrinogen III + 4 H(+) = coproporphyrinogen III + 4 CO2. The protein operates within porphyrin-containing compound metabolism; protoporphyrin-IX biosynthesis; coproporphyrinogen-III from 5-aminolevulinate: step 4/4. Functionally, catalyzes the decarboxylation of four acetate groups of uroporphyrinogen-III to yield coproporphyrinogen-III. The chain is Uroporphyrinogen decarboxylase from Campylobacter jejuni (strain RM1221).